A 742-amino-acid polypeptide reads, in one-letter code: Kanadaptin (742 aa).

The segment covering 1-16 (MADILSQSETLASQDL) has biased composition (polar residues). The disordered stretch occupies residues 1-112 (MADILSQSET…PPWGGPATAP (112 aa)). The span at 27–43 (VSPAARSKAPASSSSNP) shows a compositional bias: low complexity. S28 carries the phosphoserine modification. A compositionally biased stretch (basic and acidic residues) spans 72–82 (GDFRSLQEEQS). S90 is subject to Phosphoserine. Residues 96-106 (RAPPYQEPPWG) show a composition bias toward pro residues. The FHA domain maps to 135–195 (CLFGRLSGCD…HGTFLNKTRI (61 aa)). Positions 254-282 (LGEDSDEEEEMDTSERKINAGSQDDEMGC) are disordered. Acidic residues predominate over residues 256 to 265 (EDSDEEEEMD). A phosphoserine mark is found at S258 and S412. K441 participates in a covalent cross-link: Glycyl lysine isopeptide (Lys-Gly) (interchain with G-Cter in SUMO2). The stretch at 443–476 (ETFESLVAKLNDAERELSEISERLKASSQVLSES) forms a coiled coil. Phosphoserine is present on S476. The tract at residues 565-742 (LKTGTVGKLP…RTHLNDKYGY (178 aa)) is disordered. The span at 591–606 (PEVEEEEEEEEEEEKE) shows a compositional bias: acidic residues. Positions 607–619 (KEEHEKKKLEDGS) are enriched in basic and acidic residues. Phosphoserine is present on residues S655 and S658. Residues 699-708 (PGPGKLPPTL) are compositionally biased toward low complexity. Positions 732-742 (GRTHLNDKYGY) are enriched in basic and acidic residues.

As to expression, ubiquitously expressed.

It is found in the nucleus. The protein resides in the cytoplasm. This chain is Kanadaptin (SLC4A1AP), found in Homo sapiens (Human).